The primary structure comprises 308 residues: Probable GTP 3',8-cyclase (308 aa).

The region spanning 4-224 (RFGRPLEDLR…QIRKKHFRPR (221 aa)) is the Radical SAM core domain. A GTP-binding site is contributed by R13. Residues C20, C24, and C27 each contribute to the [4Fe-4S] cluster site. GTP is bound at residue K60. G64 serves as a coordination point for S-adenosyl-L-methionine. T90 provides a ligand contact to GTP. Residue S114 participates in S-adenosyl-L-methionine binding. Residue K151 coordinates GTP. C245 and C248 together coordinate [4Fe-4S] cluster. A GTP-binding site is contributed by 250–252 (RIR). Position 262 (C262) interacts with [4Fe-4S] cluster.

It belongs to the radical SAM superfamily. MoaA family. Requires [4Fe-4S] cluster as cofactor.

The enzyme catalyses GTP + AH2 + S-adenosyl-L-methionine = (8S)-3',8-cyclo-7,8-dihydroguanosine 5'-triphosphate + 5'-deoxyadenosine + L-methionine + A + H(+). The protein operates within cofactor biosynthesis; molybdopterin biosynthesis. Catalyzes the cyclization of GTP to (8S)-3',8-cyclo-7,8-dihydroguanosine 5'-triphosphate. In Saccharolobus islandicus (strain M.16.27) (Sulfolobus islandicus), this protein is Probable GTP 3',8-cyclase.